We begin with the raw amino-acid sequence, 293 residues long: Elongation factor Ts (293 aa).

The tract at residues 80–83 is involved in Mg(2+) ion dislocation from EF-Tu; the sequence is TDFV.

Belongs to the EF-Ts family.

It localises to the cytoplasm. Its function is as follows. Associates with the EF-Tu.GDP complex and induces the exchange of GDP to GTP. It remains bound to the aminoacyl-tRNA.EF-Tu.GTP complex up to the GTP hydrolysis stage on the ribosome. The sequence is that of Elongation factor Ts from Paraburkholderia phymatum (strain DSM 17167 / CIP 108236 / LMG 21445 / STM815) (Burkholderia phymatum).